A 2621-amino-acid chain; its full sequence is Nonribosomal peptide synthetase dtpA (2621 aa).

The interval 446–844 (CMEQPNAEAI…GRKDQQVKIR (399 aa)) is adenylation 1. The Carrier 1 domain maps to 978–1054 (QPYTQVEETL…EVALYSRALS (77 aa)). Position 1015 is an O-(pantetheine 4'-phosphoryl)serine (serine 1015). Positions 1095–1506 (EDIYPCTALQ…LNQLELAGPQ (412 aa)) are condensation 1. The interval 1534–1930 (SRTQPGASAI…GRRDNQVKLR (397 aa)) is adenylation 2. The Carrier 2 domain occupies 2071–2147 (QPSTTQEALV…LFCTNASTSI (77 aa)). O-(pantetheine 4'-phosphoryl)serine is present on serine 2108. The interval 2220–2618 (AIFKLHGSKV…HSARPIASID (399 aa)) is condensation 2.

This sequence belongs to the NRP synthetase family.

The protein operates within alkaloid biosynthesis. Nonribosomal peptide synthetase; part of the gene cluster that mediates the biosynthesis of the dimeric diketopiperazine alkaloid ditryptophenaline. The nonribosomal peptide synthase dtpA accepts L-tryptophan and L-phenylalanine as its substrates and forms the phenylalanyl-tryptophanyl cyclic dipeptide product cyclophenylalanyltryptophenyl. The N-methyltransferase dtpB is responsible for the N-methylation of cyclophenylalanyltryptophenyl to yield cyclo-N-methylphenylalanyltryptophenyl. The cytochrome P450 monooxygenase is responsible not only for pyrroloindole ring formation but also for concurrent dimerization of N-methylphenylalanyltryptophanyl diketopiperazine monomers into a homodimeric product. The polypeptide is Nonribosomal peptide synthetase dtpA (Aspergillus flavus (strain ATCC 200026 / FGSC A1120 / IAM 13836 / NRRL 3357 / JCM 12722 / SRRC 167)).